The sequence spans 259 residues: Eukaryotic translation initiation factor 3 subunit G-2 (259 aa).

An RRM domain is found at 179–257 (SAVRISNLSE…LILSVEWSKP (79 aa)).

Belongs to the eIF-3 subunit G family. In terms of assembly, component of the eukaryotic translation initiation factor 3 (eIF-3) complex. The eIF-3 complex interacts with pix.

Its subcellular location is the cytoplasm. Its function is as follows. RNA-binding component of the eukaryotic translation initiation factor 3 (eIF-3) complex, which is involved in protein synthesis of a specialized repertoire of mRNAs and, together with other initiation factors, stimulates binding of mRNA and methionyl-tRNAi to the 40S ribosome. The eIF-3 complex specifically targets and initiates translation of a subset of mRNAs involved in cell proliferation. This subunit can bind 18S rRNA. The protein is Eukaryotic translation initiation factor 3 subunit G-2 of Drosophila virilis (Fruit fly).